Consider the following 264-residue polypeptide: Short chain dehydrogenase/reductase nsrJ (264 aa).

I24, D70, N97, and R130 together coordinate NADP(+). Residues S146 and S147 each act as proton donor in the active site. NADP(+) is bound by residues Y161, K165, and T196. Catalysis depends on Y161, which acts as the Proton acceptor. K165 acts as the Lowers pKa of active site Tyr in catalysis.

This sequence belongs to the short-chain dehydrogenases/reductases (SDR) family.

The protein operates within secondary metabolite biosynthesis. In terms of biological role, short chain dehydrogenase/reductase; part of the gene cluster that mediates the biosynthesis of the tetrahydroxanthone dimer neosartorin, which exhibits antibacterial activity. The two different monomeric units appear to be synthesized by the same set of enzymes, among which the Baeyer-Villiger monooxygenase nsrF is the key enzyme for the divergence of the biosynthetic routes. The pathway begins with the synthesis of atrochrysone thioester by the polyketide synthase nsrB. The atrochrysone carboxyl ACP thioesterase nsrC then breaks the thioester bond and releases the atrochrysone carboxylic acid from AacuL. Atrochrysone carboxylic acid is decarboxylated by the decarboxylase nsrE, and oxidized by the anthrone oxygenase nsrD to yield emodin. Emodin is then reduced to emodin hydroquinone by the oxidoreductase nsrR. A-ring reduction by the short chain dehydrogenase nsrJ, dehydration by the scytalone dehydratase-like protein nsrI and probable spontaneous re-oxidation, results in overall deoxygenation to chrysophanol. The Baeyer-Villiger monooxygenase nsrF accepts chrysophanol as a substrate to insert one oxygen atom at two different positions to yield the precursors of both monomric units. NsrF is promiscuous/flexible in interacting with the 2 (non methylated and methylated) aromatic rings of chrysophanol, thus diverging the biosynthetic pathway at this point. After the hydrolysis of the lactones, methylesterification by the methyltransferase nsrG yields respectively moniliphenone and 2,2',6'-trihydroxy-4-methyl-6-methoxya-cyldiphenylmethanone. The next steps are the hydroxylation by the FAD-dependent monooxygenase nsrK, followed by isomerization by the monooxygenase nsrQ. The short chain dehydrogenase/reductase nsrO then catalyzes the C-5 ketoreduction to give the xanthone skeleton of blennolide C and 5-acetylblennolide A. The acetyltransferase nsrL has a strict substrate specificity and uses only blennolide A but not blennolide C to yield 5-acetylblennolide A as the single-acetylated product. In the final step of the biosynthesis, the heterodimerization of the 2 xanthones, blennolide C and 5-acetylblennolide A, is catalyzed by the cytochrome P450 monooxygenase nsrP. NsrP can utilize at least three different xanthones as its substrates to perform the dimerization reaction. This is Short chain dehydrogenase/reductase nsrJ from Aspergillus novofumigatus (strain IBT 16806).